Reading from the N-terminus, the 600-residue chain is Elongation factor 4 (600 aa).

A tr-type G domain is found at Lys5–Lys187. GTP is bound by residues Asp17 to Thr22 and Asn134 to Asp137.

It belongs to the TRAFAC class translation factor GTPase superfamily. Classic translation factor GTPase family. LepA subfamily.

It localises to the cell inner membrane. The catalysed reaction is GTP + H2O = GDP + phosphate + H(+). In terms of biological role, required for accurate and efficient protein synthesis under certain stress conditions. May act as a fidelity factor of the translation reaction, by catalyzing a one-codon backward translocation of tRNAs on improperly translocated ribosomes. Back-translocation proceeds from a post-translocation (POST) complex to a pre-translocation (PRE) complex, thus giving elongation factor G a second chance to translocate the tRNAs correctly. Binds to ribosomes in a GTP-dependent manner. This chain is Elongation factor 4, found in Rickettsia rickettsii (strain Iowa).